The chain runs to 253 residues: 3-deoxy-manno-octulosonate cytidylyltransferase (253 aa).

It belongs to the KdsB family.

It is found in the cytoplasm. The catalysed reaction is 3-deoxy-alpha-D-manno-oct-2-ulosonate + CTP = CMP-3-deoxy-beta-D-manno-octulosonate + diphosphate. Its pathway is nucleotide-sugar biosynthesis; CMP-3-deoxy-D-manno-octulosonate biosynthesis; CMP-3-deoxy-D-manno-octulosonate from 3-deoxy-D-manno-octulosonate and CTP: step 1/1. It participates in bacterial outer membrane biogenesis; lipopolysaccharide biosynthesis. Its function is as follows. Activates KDO (a required 8-carbon sugar) for incorporation into bacterial lipopolysaccharide in Gram-negative bacteria. The polypeptide is 3-deoxy-manno-octulosonate cytidylyltransferase (Haemophilus ducreyi (strain 35000HP / ATCC 700724)).